A 287-amino-acid chain; its full sequence is Light-independent protochlorophyllide reductase iron-sulfur ATP-binding protein (287 aa).

Residues 10-15 and Lys-39 each bind ATP; that span reads GVGKST. Mg(2+) is bound at residue Ser-14. Residues Cys-95 and Cys-129 each coordinate [4Fe-4S] cluster. 181-182 is a binding site for ATP; that stretch reads NR.

The protein belongs to the NifH/BchL/ChlL family. In terms of assembly, homodimer. Protochlorophyllide reductase is composed of three subunits; BchL, BchN and BchB. The cofactor is [4Fe-4S] cluster.

It carries out the reaction chlorophyllide a + oxidized 2[4Fe-4S]-[ferredoxin] + 2 ADP + 2 phosphate = protochlorophyllide a + reduced 2[4Fe-4S]-[ferredoxin] + 2 ATP + 2 H2O. Its pathway is porphyrin-containing compound metabolism; bacteriochlorophyll biosynthesis (light-independent). Functionally, component of the dark-operative protochlorophyllide reductase (DPOR) that uses Mg-ATP and reduced ferredoxin to reduce ring D of protochlorophyllide (Pchlide) to form chlorophyllide a (Chlide). This reaction is light-independent. The L component serves as a unique electron donor to the NB-component of the complex, and binds Mg-ATP. The polypeptide is Light-independent protochlorophyllide reductase iron-sulfur ATP-binding protein (Heliobacterium modesticaldum (strain ATCC 51547 / Ice1)).